A 201-amino-acid chain; its full sequence is Small ribosomal subunit protein uS4 (201 aa).

Positions Met1–Glu45 are disordered. One can recognise an S4 RNA-binding domain in the interval Ser91–Phe157.

This sequence belongs to the universal ribosomal protein uS4 family. As to quaternary structure, part of the 30S ribosomal subunit. Contacts protein S5. The interaction surface between S4 and S5 is involved in control of translational fidelity.

In terms of biological role, one of the primary rRNA binding proteins, it binds directly to 16S rRNA where it nucleates assembly of the body of the 30S subunit. Functionally, with S5 and S12 plays an important role in translational accuracy. In Cutibacterium acnes (strain DSM 16379 / KPA171202) (Propionibacterium acnes), this protein is Small ribosomal subunit protein uS4.